A 271-amino-acid polypeptide reads, in one-letter code: MVVAKKSLGQHFLTDESFLDRIVNALPPLNPLKLVEIGVGLGDLTLKLLDRYPLKTYEIDSHLCEKMRSKLKAQKKPFKLELVEKDALFLKEEEPYFLISNLPYYIATRLVLNAFKDPKCRGLLVMTQKEVALKFCAKDSQNALSVLAHTIGNATLLFDVPPSAFSPPPKVFSSVFEVIKEPLKEKALASLAQAPFFEEALQKGFEMLEDFLKACFSSPRKTLSNNLKKSVSYREKLDKVLDFLALENQPTSVRASEIKDYLKLLNYLLKG.

6 residues coordinate S-adenosyl-L-methionine: H11, L13, G38, E58, D86, and N101.

The protein belongs to the class I-like SAM-binding methyltransferase superfamily. rRNA adenine N(6)-methyltransferase family. RsmA subfamily.

Its subcellular location is the cytoplasm. The enzyme catalyses adenosine(1518)/adenosine(1519) in 16S rRNA + 4 S-adenosyl-L-methionine = N(6)-dimethyladenosine(1518)/N(6)-dimethyladenosine(1519) in 16S rRNA + 4 S-adenosyl-L-homocysteine + 4 H(+). Functionally, specifically dimethylates two adjacent adenosines (A1518 and A1519) in the loop of a conserved hairpin near the 3'-end of 16S rRNA in the 30S particle. May play a critical role in biogenesis of 30S subunits. The sequence is that of Ribosomal RNA small subunit methyltransferase A from Helicobacter pylori (strain ATCC 700392 / 26695) (Campylobacter pylori).